The chain runs to 1064 residues: Adenylate cyclase type 4 (1064 aa).

Residues 1–28 (MARLFSPRPPPSEDLFYETYYSLSQQYP) are Cytoplasmic-facing. Transmembrane regions (helical) follow at residues 29 to 50 (LLIL…VAWA), 61 to 80 (FLTT…GLAS), 94 to 117 (GLIW…VSAW), 120 to 138 (VSFF…PLGM), 141 to 162 (AAAA…YLGW), and 170 to 190 (LLPQ…VGAY). Residues 191–582 (HKALMERALR…YRLSALPAFK (392 aa)) lie on the Cytoplasmic side of the membrane. Residues D278, I279, and D322 each coordinate Mg(2+). ATP is bound by residues 278 to 283 (DIVGFT), 320 to 322 (LGD), and R366. A disordered region spans residues 498 to 523 (DSPASTSTPLPEKAFSPQWSLDRSRT). A Phosphoserine modification is found at S517. Phosphothreonine is present on T533. 3 helical membrane passes run 583-604 (YYAA…LVTT), 608-630 (ALAT…CFSE), and 661-684 (VALG…FLPV). Topologically, residues 685-707 (SSDCPFLAPNVSSVAFNTSWELP) are extracellular. 2 N-linked (GlcNAc...) asparagine glycosylation sites follow: N694 and N701. The next 3 helical transmembrane spans lie at 708-733 (ASLP…SLFL), 741-761 (LLLL…SHAW), and 788-804 (MGAI…LVLA). At 805–1064 (RQNEYYCRLD…LTRTGSPSAS (260 aa)) the chain is on the cytoplasmic side. ATP is bound by residues K914, 994 to 996 (DIW), 1001 to 1005 (NVASR), and K1041.

The protein belongs to the adenylyl cyclase class-4/guanylyl cyclase family. The cofactor is Mg(2+). Mn(2+) is required as a cofactor. In terms of tissue distribution, widely distributed.

It localises to the cell membrane. Its subcellular location is the cytoplasm. It carries out the reaction ATP = 3',5'-cyclic AMP + diphosphate. Activated by forskolin. Insensitive to calcium/calmodulin. Stimulated by GNAS and by the G-protein beta and gamma subunit complex. Its function is as follows. Catalyzes the formation of the signaling molecule cAMP in response to G-protein signaling. This Rattus norvegicus (Rat) protein is Adenylate cyclase type 4 (Adcy4).